The sequence spans 301 residues: 2-oxo-3-(phosphooxy)propyl 3-oxoalkanoate synthase (301 aa).

Belongs to the AfsA family.

It catalyses the reaction a medium-chain 3-oxoacyl-[ACP] + dihydroxyacetone phosphate = a (4-alkanoyl-5-oxo-2,5-dihydrofuran-3-yl)methyl phosphate + holo-[ACP] + H2O. Functionally, involved in the biosynthesis of A factor (2-isocapryloyl-3R-hydroxymethyl-gamma-butyrolactone), a gamma-butyrolactone autoregulator that triggers secondary metabolism and morphogenesis in Streptomyces. Catalyzes beta-ketoacyl transfer from 8-methyl-3-oxononanoyl-acyl carrier protein (ACP) to the hydroxyl group of dihydroxyacetone phosphate (DHAP), thus producing an 8-methyl-3-oxononanoyl-DHAP ester. This is 2-oxo-3-(phosphooxy)propyl 3-oxoalkanoate synthase from Streptomyces griseus.